The primary structure comprises 117 residues: Biogenesis of lysosome-related organelles complex 1 subunit BLS1 (117 aa).

The disordered stretch occupies residues 97–117 (EGKAQDTEQAPGKGDRIFRSD).

It belongs to the BLOC1S1 family. In terms of assembly, component of the biogenesis of lysosome-related organelles complex-1 (BLOC-1).

The protein resides in the endosome. Its function is as follows. Component of the biogenesis of lysosome-related organelles complex-1 (BLOC-1), a complex involved in endosomal cargo sorting. This chain is Biogenesis of lysosome-related organelles complex 1 subunit BLS1 (BLS1), found in Eremothecium gossypii (strain ATCC 10895 / CBS 109.51 / FGSC 9923 / NRRL Y-1056) (Yeast).